Here is a 134-residue protein sequence, read N- to C-terminus: Citrolysin protein 2 (134 aa).

The polypeptide is Citrolysin protein 2 (Citrobacter freundii).